The following is a 198-amino-acid chain: Translation machinery-associated protein 22 (198 aa).

Positions 99–170 constitute an SUI1 domain; sequence VIIKREARTK…EVETYIHSLL (72 aa).

The protein belongs to the DENR family. As to quaternary structure, interacts with the 40S ribosomal subunit.

It is found in the cytoplasm. The protein is Translation machinery-associated protein 22 (TMA22) of Saccharomyces cerevisiae (strain YJM789) (Baker's yeast).